The chain runs to 185 residues: Heavy metal-associated isoprenylated plant protein 11 (185 aa).

An HMA domain is found at 39–106 (QQNTNVVFKL…ICKHVAIIAA (68 aa)). Over residues 109–158 (IREPEQNRNPVTRREPNREPEQNRSRVTRREPSREPEPNRAPLARRESRP) the composition is skewed to basic and acidic residues. The segment at 109-185 (IREPEQNRNP…GENSDGCIIM (77 aa)) is disordered. Cysteine methyl ester is present on cysteine 182. Cysteine 182 carries S-farnesyl cysteine lipidation. A propeptide spans 183-185 (IIM) (removed in mature form).

This sequence belongs to the HIPP family.

In terms of biological role, probable heavy-metal-binding protein. The sequence is that of Heavy metal-associated isoprenylated plant protein 11 from Arabidopsis thaliana (Mouse-ear cress).